The primary structure comprises 1850 residues: Serine/threonine-protein kinase WNK (1850 aa).

3 disordered regions span residues 1-108, 221-253, and 272-309; these read MPDS…NALE, QHSI…NNDK, and MVND…EKAA. Low complexity-rich tracts occupy residues 16–26 and 234–251; these read SSVSSTTASTT and PPNT…AANN. Over residues 284-309 the composition is skewed to basic and acidic residues; it reads DMDKMVSEEERARKEQEKREEEEKAA. The Protein kinase domain occupies 334–596; that stretch reads LKFDEELGRG…VKQLLVDDFF (263 aa). Residues Ser-344, 416–419, and Lys-466 contribute to the ATP site; that span reads TELM. Asp-483 serves as the catalytic Proton acceptor. Positions 693-749 form a coiled coil; the sequence is DHRLLEIKRAKEEEERIREEAEIKEELRLRAEAKEKEKERLEKERLEKKAAAAAAAN. Over residues 727–742 the composition is skewed to basic and acidic residues; sequence EKEKERLEKERLEKKA. 7 disordered regions span residues 727–790, 890–943, 1040–1130, 1188–1249, 1588–1636, 1721–1740, and 1769–1850; these read EKEK…AQQP, TPAS…KRKS, EPPT…AAKP, SPVS…TPAI, GTHI…PSHS, ASLS…DNEG, and IIPS…IENV. The segment covering 751–760 has biased composition (pro residues); it reads NPTPIPPTPA. A compositionally biased stretch (polar residues) spans 776–790; sequence STQTSAEIQQSAQQP. Low complexity predominate over residues 890-934; it reads TPASIASPSPAPSATDVASTTAPVTPAPTPTTTTDGGAAAASTTT. Basic and acidic residues predominate over residues 1062-1071; that stretch reads PKIEIEKTPP. The span at 1077–1101 shows a compositional bias: polar residues; that stretch reads QEPNNVQVTNVRKVSQESNAESVQS. A compositionally biased stretch (low complexity) spans 1188–1207; sequence SPVSHSLSSNSSPSATTHSN. Over residues 1208–1217 the composition is skewed to polar residues; that stretch reads MSSIQSTTSV. The segment covering 1771 to 1805 has biased composition (low complexity); that stretch reads PSSRQSVRSATSSSPSTPPSSSSAPPKSLSSPTKS. Residues 1806 to 1820 show a composition bias toward polar residues; that stretch reads YVSHCSLSIGYGSTA. Residues 1821–1832 are compositionally biased toward low complexity; the sequence is SSEQQQREPSPS.

It belongs to the protein kinase superfamily. Ser/Thr protein kinase family. WNK subfamily. Interacts with gck-3 (via C-terminus). Mg(2+) is required as a cofactor. As to expression, expressed in pharynx, nervous system, hypodermis, spermatheca, excretory cell and canal and body wall muscles.

It is found in the cytoplasm. The catalysed reaction is L-seryl-[protein] + ATP = O-phospho-L-seryl-[protein] + ADP + H(+). It carries out the reaction L-threonyl-[protein] + ATP = O-phospho-L-threonyl-[protein] + ADP + H(+). With respect to regulation, activated in response to hyperosmotic stress: cell shrinkage promotes formation of a membraneless compartment that concentrates wnk-1 with its downstrem substrates. Its function is as follows. Serine/threonine-protein kinase component of the WNK3-SPAK/OSR1 kinase cascade, which plays an important role in the regulation of electrolyte homeostasis and regulatory volume increase in response to hyperosmotic stress. Wnk-1 mediates regulatory volume increase in response to hyperosmotic stress by acting as a molecular crowding sensor, which senses cell shrinkage and mediates formation of a membraneless compartment by undergoing liquid-liquid phase separation. The membraneless compartment concentrates wnk-1 with its substrates. Phosphorylates gck-3. Plays a role in osmotic stress responses during which it increases gpdh-1 translation, likely by phosphorylating gck-3. Essential for larval development and the tubular formation of the excretory canals. The chain is Serine/threonine-protein kinase WNK from Caenorhabditis elegans.